The primary structure comprises 255 residues: BTB/POZ domain-containing protein KCTD14 (255 aa).

Residues 1–29 (MWQGCAVERPVGRMTSQTPLPQSPRPRRP) are disordered. A BTB domain is found at 33–130 (TVVELNVGGE…LLEDMPQIFG (98 aa)).

In Homo sapiens (Human), this protein is BTB/POZ domain-containing protein KCTD14 (KCTD14).